A 158-amino-acid chain; its full sequence is 6,7-dimethyl-8-ribityllumazine synthase (158 aa).

5-amino-6-(D-ribitylamino)uracil contacts are provided by residues F23, 61 to 63 (SFE), and 85 to 87 (AVI). 90 to 91 (DT) provides a ligand contact to (2S)-2-hydroxy-3-oxobutyl phosphate. The Proton donor role is filled by H93. F118 contributes to the 5-amino-6-(D-ribitylamino)uracil binding site. R132 is a binding site for (2S)-2-hydroxy-3-oxobutyl phosphate.

It belongs to the DMRL synthase family.

The enzyme catalyses (2S)-2-hydroxy-3-oxobutyl phosphate + 5-amino-6-(D-ribitylamino)uracil = 6,7-dimethyl-8-(1-D-ribityl)lumazine + phosphate + 2 H2O + H(+). The protein operates within cofactor biosynthesis; riboflavin biosynthesis; riboflavin from 2-hydroxy-3-oxobutyl phosphate and 5-amino-6-(D-ribitylamino)uracil: step 1/2. Functionally, catalyzes the formation of 6,7-dimethyl-8-ribityllumazine by condensation of 5-amino-6-(D-ribitylamino)uracil with 3,4-dihydroxy-2-butanone 4-phosphate. This is the penultimate step in the biosynthesis of riboflavin. This Prochlorococcus marinus (strain NATL1A) protein is 6,7-dimethyl-8-ribityllumazine synthase.